Reading from the N-terminus, the 1024-residue chain is Translation initiation factor IF-2 (1024 aa).

Residues 33–425 (SHMSSLEDDT…GRVKKTKTMK (393 aa)) are disordered. Composition is skewed to basic and acidic residues over residues 43–62 (EARV…DTRV), 135–148 (TPED…ELKP), 167–198 (TPAK…KETS), and 223–263 (SKPD…KEVR). The segment covering 316–325 (EATQAPTSPQ) has biased composition (polar residues). Positions 332-350 (KPADKGPARAQAHRPDTGR) are enriched in basic and acidic residues. The segment covering 365–375 (RSKKKEWKKKG) has biased composition (basic residues). The span at 394 to 406 (SVVEGKDLYEKGR) shows a compositional bias: basic and acidic residues. The segment covering 407 to 423 (SGKKGRRKDGRVKKTKT) has biased composition (basic residues). The tr-type G domain maps to 518–687 (SRPPVVTIMG…LLQSEVLELK (170 aa)). Residues 527–534 (GHVDHGKT) form a G1 region. 527-534 (GHVDHGKT) contributes to the GTP binding site. Residues 552-556 (GITQH) form a G2 region. Residues 573-576 (DTPG) are G3. GTP-binding positions include 573-577 (DTPGH) and 627-630 (NKMD). Positions 627–630 (NKMD) are G4. Residues 663–665 (SAK) are G5.

It belongs to the TRAFAC class translation factor GTPase superfamily. Classic translation factor GTPase family. IF-2 subfamily.

Its subcellular location is the cytoplasm. Its function is as follows. One of the essential components for the initiation of protein synthesis. Protects formylmethionyl-tRNA from spontaneous hydrolysis and promotes its binding to the 30S ribosomal subunits. Also involved in the hydrolysis of GTP during the formation of the 70S ribosomal complex. The polypeptide is Translation initiation factor IF-2 (Desulforapulum autotrophicum (strain ATCC 43914 / DSM 3382 / VKM B-1955 / HRM2) (Desulfobacterium autotrophicum)).